A 246-amino-acid polypeptide reads, in one-letter code: Putative protein phosphatase 2C-type (246 aa).

A PPM-type phosphatase domain is found at lysine 2–asparagine 240. Positions 36, 37, 192, and 231 each coordinate Mn(2+).

Mg(2+) is required as a cofactor. The cofactor is Mn(2+).

It catalyses the reaction O-phospho-L-seryl-[protein] + H2O = L-seryl-[protein] + phosphate. The catalysed reaction is O-phospho-L-threonyl-[protein] + H2O = L-threonyl-[protein] + phosphate. This chain is Putative protein phosphatase 2C-type, found in Streptococcus pyogenes serotype M6 (strain ATCC BAA-946 / MGAS10394).